Consider the following 842-residue polypeptide: 9-beta-pimara-7,15-diene synthase, chloroplastic (842 aa).

A chloroplast-targeting transit peptide spans 1–56 (MASPMEAVARSSLVLAPRRRRALGLLPAAAAAAPFVLDCRRRHNGGMRRPHVSFAC). Mg(2+) is bound by residues Asp591, Asp595, Asn735, Ser739, and Glu743. A DDXXD motif motif is present at residues 591-595 (DDFFD).

It belongs to the terpene synthase family. The cofactor is Mg(2+). As to expression, expressed in roots.

The protein localises to the plastid. The protein resides in the chloroplast. It catalyses the reaction 9alpha-copalyl diphosphate = 9beta-pimara-7,15-diene + diphosphate. Involved in the biosynthesis of momilactone A and B phytoalexins. Catalyzes the conversion of syn-copalyl diphosphate to the phytoalexin precursor syn-pimara-7,15-diene. The sequence is that of 9-beta-pimara-7,15-diene synthase, chloroplastic from Oryza sativa subsp. japonica (Rice).